A 117-amino-acid polypeptide reads, in one-letter code: Holo-[acyl-carrier-protein] synthase (117 aa).

Aspartate 8 and glutamate 55 together coordinate Mg(2+).

This sequence belongs to the P-Pant transferase superfamily. AcpS family. Mg(2+) is required as a cofactor.

Its subcellular location is the cytoplasm. It catalyses the reaction apo-[ACP] + CoA = holo-[ACP] + adenosine 3',5'-bisphosphate + H(+). Functionally, transfers the 4'-phosphopantetheine moiety from coenzyme A to a Ser of acyl-carrier-protein. The protein is Holo-[acyl-carrier-protein] synthase of Finegoldia magna (strain ATCC 29328 / DSM 20472 / WAL 2508) (Peptostreptococcus magnus).